The chain runs to 95 residues: Aspartyl/glutamyl-tRNA(Asn/Gln) amidotransferase subunit C (95 aa).

It belongs to the GatC family. As to quaternary structure, heterotrimer of A, B and C subunits.

It catalyses the reaction L-glutamyl-tRNA(Gln) + L-glutamine + ATP + H2O = L-glutaminyl-tRNA(Gln) + L-glutamate + ADP + phosphate + H(+). The enzyme catalyses L-aspartyl-tRNA(Asn) + L-glutamine + ATP + H2O = L-asparaginyl-tRNA(Asn) + L-glutamate + ADP + phosphate + 2 H(+). Functionally, allows the formation of correctly charged Asn-tRNA(Asn) or Gln-tRNA(Gln) through the transamidation of misacylated Asp-tRNA(Asn) or Glu-tRNA(Gln) in organisms which lack either or both of asparaginyl-tRNA or glutaminyl-tRNA synthetases. The reaction takes place in the presence of glutamine and ATP through an activated phospho-Asp-tRNA(Asn) or phospho-Glu-tRNA(Gln). This is Aspartyl/glutamyl-tRNA(Asn/Gln) amidotransferase subunit C from Chlorobaculum tepidum (strain ATCC 49652 / DSM 12025 / NBRC 103806 / TLS) (Chlorobium tepidum).